The primary structure comprises 394 residues: Mitogen-activated protein kinase 2 (394 aa).

Over residues 1 to 10 (MDGPAQQTDT) the composition is skewed to polar residues. The interval 1 to 27 (MDGPAQQTDTVMAEAAAAQQPAPPSQP) is disordered. Residues 61–346 (KPPIMPIGKG…VEDALAHPYL (286 aa)) form the Protein kinase domain. ATP is bound by residues 67 to 75 (IGKGAYGIV) and lysine 90. The active-site Proton acceptor is the aspartate 187. Phosphothreonine is present on threonine 219. Residues 219–221 (TEY) carry the TXY motif. At tyrosine 221 the chain carries Phosphotyrosine. Position 224 is a phosphothreonine (threonine 224).

This sequence belongs to the protein kinase superfamily. CMGC Ser/Thr protein kinase family. MAP kinase subfamily. Requires Mg(2+) as cofactor. In terms of processing, activated by cold, wounding and UV-C in a cultivar-dependent manner; phosphorylated at Tyr-221 in cv. Subicho but not in cv. Pungchon. In terms of tissue distribution, expressed constitutively in roots, stems, flowers and fruits of the hot pepper (cv. Subicho).

It carries out the reaction L-seryl-[protein] + ATP = O-phospho-L-seryl-[protein] + ADP + H(+). The enzyme catalyses L-threonyl-[protein] + ATP = O-phospho-L-threonyl-[protein] + ADP + H(+). Activated by threonine and tyrosine phosphorylation. Protein kinase involved in oxidative stress-mediated and innate immune MAP kinase signaling cascades. This Capsicum annuum (Capsicum pepper) protein is Mitogen-activated protein kinase 2.